The primary structure comprises 116 residues: Aspartate 1-decarboxylase (116 aa).

Serine 25 (schiff-base intermediate with substrate; via pyruvic acid) is an active-site residue. Serine 25 bears the Pyruvic acid (Ser) mark. Threonine 57 provides a ligand contact to substrate. The active-site Proton donor is tyrosine 58. 73-75 (GAA) lines the substrate pocket.

This sequence belongs to the PanD family. In terms of assembly, heterooctamer of four alpha and four beta subunits. Pyruvate serves as cofactor. Is synthesized initially as an inactive proenzyme, which is activated by self-cleavage at a specific serine bond to produce a beta-subunit with a hydroxyl group at its C-terminus and an alpha-subunit with a pyruvoyl group at its N-terminus.

It is found in the cytoplasm. The catalysed reaction is L-aspartate + H(+) = beta-alanine + CO2. It functions in the pathway cofactor biosynthesis; (R)-pantothenate biosynthesis; beta-alanine from L-aspartate: step 1/1. Functionally, catalyzes the pyruvoyl-dependent decarboxylation of aspartate to produce beta-alanine. The protein is Aspartate 1-decarboxylase of Syntrophus aciditrophicus (strain SB).